The chain runs to 87 residues: Large ribosomal subunit protein bL31B (87 aa).

The protein belongs to the bacterial ribosomal protein bL31 family. Type B subfamily. In terms of assembly, part of the 50S ribosomal subunit.

The chain is Large ribosomal subunit protein bL31B from Burkholderia pseudomallei (strain 1106a).